The following is a 189-amino-acid chain: Ribose 1,5-bisphosphate phosphokinase PhnN (189 aa).

Residue 10-17 (GPSGSGKD) coordinates ATP.

This sequence belongs to the ribose 1,5-bisphosphokinase family.

The catalysed reaction is alpha-D-ribose 1,5-bisphosphate + ATP = 5-phospho-alpha-D-ribose 1-diphosphate + ADP. It functions in the pathway metabolic intermediate biosynthesis; 5-phospho-alpha-D-ribose 1-diphosphate biosynthesis; 5-phospho-alpha-D-ribose 1-diphosphate from D-ribose 5-phosphate (route II): step 3/3. Functionally, catalyzes the phosphorylation of ribose 1,5-bisphosphate to 5-phospho-D-ribosyl alpha-1-diphosphate (PRPP). This chain is Ribose 1,5-bisphosphate phosphokinase PhnN, found in Enterobacter lignolyticus (strain SCF1).